Consider the following 381-residue polypeptide: Glycerate 2-kinase (381 aa).

It belongs to the glycerate kinase type-1 family.

It catalyses the reaction (R)-glycerate + ATP = (2R)-2-phosphoglycerate + ADP + H(+). Functionally, catalyzes the transfer of the phosphate group from adenosine triphosphate (ATP) to (R)-glycerate to form (2R)-2-phosphoglycerate, an enzymatic step in (L)-glucarate/galactarate catabolic pathway. In Escherichia coli (strain K12), this protein is Glycerate 2-kinase (garK).